The primary structure comprises 243 residues: MDCGIITSKTILLLLSLIFWAAGAALAYVGSYVIKSYNNFEDFMSDRHTLIPAAIIIGVAVVMFIIGFVGCCATLRESKVGLGLFLIIIMLIFAAEVTAFVFGIIYRGRIRGDLEKSMNDVFLKYDGLNSETHAVDYLQSQLECCGVKNQTDWTLTSWFAQHNNTVPQSCCKANMTQCTGQLSQPDLLNTQGCEAKLEQVLQDVLSYAMLVILGFAIIKFFGMLSVCVITCKSKKNEYQPLYA.

Over 1–9 the chain is Cytoplasmic; that stretch reads MDCGIITSK. The helical transmembrane segment at 10-30 threads the bilayer; it reads TILLLLSLIFWAAGAALAYVG. Residues 31 to 49 lie on the Lumenal side of the membrane; that stretch reads SYVIKSYNNFEDFMSDRHT. The helical transmembrane segment at 50 to 70 threads the bilayer; that stretch reads LIPAAIIIGVAVVMFIIGFVG. Residues 71–84 lie on the Cytoplasmic side of the membrane; that stretch reads CCATLRESKVGLGL. Residues 85–105 form a helical membrane-spanning segment; sequence FLIIIMLIFAAEVTAFVFGII. Residues 106 to 208 lie on the Lumenal side of the membrane; it reads YRGRIRGDLE…QVLQDVLSYA (103 aa). N-linked (GlcNAc...) asparagine glycosylation is found at asparagine 149, asparagine 163, and asparagine 174. Residues 209–229 form a helical membrane-spanning segment; that stretch reads MLVILGFAIIKFFGMLSVCVI. Residues 230-243 are Cytoplasmic-facing; sequence TCKSKKNEYQPLYA.

The protein belongs to the tetraspanin (TM4SF) family. N-glycosylated. As to expression, strongly expressed in melanophores and xanthophores. Also detected in eye, brain, heart, skin, fin, testis and ovary.

The protein localises to the golgi apparatus membrane. It is found in the endoplasmic reticulum membrane. Plays a role in migration and segregation of pigment cells (melanophores and xanthophores). Contributes to pigment stripe patterning in the epidermis. The polypeptide is Tetraspanin-36 (Danio rerio (Zebrafish)).